The primary structure comprises 456 residues: MRKSPGLSDCLWAWILLLSTLTGRSYGQPSLQDELKDNTTVFTRILDRLLDGYDNRLRPGLGERVTEVKTDIFVTSFGPVSDHDMEYTIDVFFRQSWKDERLKFKGPMTVLRLNNLMASKIWTPDTFFHNGKKSVAHNMTMPNKLLRITEDGTLLYTMRLTVRAECPMHLEDFPMDAHACPLKFGSYAYTRAEVVYEWTREPARSVVVAEDGSRLNQYDLLGQTVDSGIVQSSTGEYVVMTTHFHLKRKIGYFVIQTYLPCIMTVILSQVSFWLNRESVPARTVFGVTTVLTMTTLSISARNSLPKVAYATAMDWFIAVCYAFVFSALIEFATVNYFTKRGYAWDGKSVVPEKPKKVKDPLIKKNNTYAPTATSYTPNLAGGDPGLATIAKSATIEPKEVKPETKPPEPKKTFNSVSKIDRLSRIAFPLLFGIFNLIYWATYLNREPQLKAPTPHQ.

The first 27 residues, 1 to 27 (MRKSPGLSDCLWAWILLLSTLTGRSYG), serve as a signal peptide directing secretion. Residues 28–253 (QPSLQDELKD…FHLKRKIGYF (226 aa)) lie on the Extracellular side of the membrane. N38 is a glycosylation site (N-linked (GlcNAc...) asparagine). A 4-aminobutanoate-binding site is contributed by R94. N138 is a glycosylation site (N-linked (GlcNAc...) asparagine). T157 contacts 4-aminobutanoate. A disulfide bond links C166 and C180. A helical membrane pass occupies residues 254-274 (VIQTYLPCIMTVILSQVSFWL). The Cytoplasmic portion of the chain corresponds to 275-279 (NRESV). The chain crosses the membrane as a helical span at residues 280–301 (PARTVFGVTTVLTMTTLSISAR). The Extracellular segment spans residues 302-311 (NSLPKVAYAT). The helical transmembrane segment at 312-333 (AMDWFIAVCYAFVFSALIEFAT) threads the bilayer. At 334–421 (VNYFTKRGYA…TFNSVSKIDR (88 aa)) the chain is on the cytoplasmic side. The helical transmembrane segment at 422–441 (LSRIAFPLLFGIFNLIYWAT) threads the bilayer. At 442-456 (YLNREPQLKAPTPHQ) the chain is on the extracellular side.

It belongs to the ligand-gated ion channel (TC 1.A.9) family. Gamma-aminobutyric acid receptor (TC 1.A.9.5) subfamily. GABRA1 sub-subfamily. As to quaternary structure, heteropentamer, formed by a combination of alpha (GABRA1-6), beta (GABRB1-3), gamma (GABRG1-3), delta (GABRD), epsilon (GABRE), rho (GABRR1-3), pi (GABRP) and theta (GABRQ) subunits, each subunit exhibiting distinct physiological and pharmacological properties. Interacts with UBQLN1. Interacts with TRAK1. Interacts with KIF21B. Identified in a complex of 720 kDa composed of LHFPL4, NLGN2, GABRA1, GABRB2, GABRG2 and GABRB3. Interacts with LHFPL4. Interacts with NLGN2. Interacts with SHISA7; interaction leads to the regulation of GABA(A) receptor trafficking, channel deactivation kinetics and pharmacology.

It is found in the postsynaptic cell membrane. The protein localises to the cell membrane. The protein resides in the cytoplasmic vesicle membrane. It catalyses the reaction chloride(in) = chloride(out). Its activity is regulated as follows. Allosterically activated by benzodiazepines, the neuroanesthetic alphaxalone and pentobarbital. Inhibited by the antagonist bicuculline. Potentiated by histamine. Functionally, alpha subunit of the heteropentameric ligand-gated chloride channel gated by gamma-aminobutyric acid (GABA), a major inhibitory neurotransmitter in the brain. GABA-gated chloride channels, also named GABA(A) receptors (GABAAR), consist of five subunits arranged around a central pore and contain GABA active binding site(s) located at the alpha and beta subunit interface(s). When activated by GABA, GABAARs selectively allow the flow of chloride anions across the cell membrane down their electrochemical gradient. Alpha-1/GABRA1-containing GABAARs are largely synaptic. Chloride influx into the postsynaptic neuron following GABAAR opening decreases the neuron ability to generate a new action potential, thereby reducing nerve transmission. GABAARs containing alpha-1 and beta-2 or -3 subunits exhibit synaptogenic activity; the gamma-2 subunit being necessary but not sufficient to induce rapid synaptic contacts formation. GABAARs function also as histamine receptor where histamine binds at the interface of two neighboring beta subunits and potentiates GABA response. GABAARs containing alpha, beta and epsilon subunits also permit spontaneous chloride channel activity while preserving the structural information required for GABA-gated openings. Alpha-1-mediated plasticity in the orbitofrontal cortex regulates context-dependent action selection. Together with rho subunits, may also control neuronal and glial GABAergic transmission in the cerebellum. This is Gamma-aminobutyric acid receptor subunit alpha-1 (GABRA1) from Pongo abelii (Sumatran orangutan).